We begin with the raw amino-acid sequence, 273 residues long: Small ribosomal subunit protein uS3 (273 aa).

A KH type-2 domain is found at 40-110; sequence IRNLFFVNYR…NLDLTINEIG (71 aa). The span at 244-265 shows a compositional bias: polar residues; it reads QVLSANKLTGSDVETSSIQALT. Residues 244–273 form a disordered region; it reads QVLSANKLTGSDVETSSIQALTKPNKEDKQ.

Belongs to the universal ribosomal protein uS3 family. As to quaternary structure, part of the 30S ribosomal subunit. Forms a tight complex with proteins S10 and S14.

Binds the lower part of the 30S subunit head. Binds mRNA in the 70S ribosome, positioning it for translation. In Mycoplasma pneumoniae (strain ATCC 29342 / M129 / Subtype 1) (Mycoplasmoides pneumoniae), this protein is Small ribosomal subunit protein uS3.